The sequence spans 851 residues: DNA mismatch repair protein MutS (851 aa).

Position 602-609 (602-609 (GPNMSGKS)) interacts with ATP.

This sequence belongs to the DNA mismatch repair MutS family.

This protein is involved in the repair of mismatches in DNA. It is possible that it carries out the mismatch recognition step. This protein has a weak ATPase activity. This is DNA mismatch repair protein MutS from Streptococcus pyogenes serotype M12 (strain MGAS2096).